The primary structure comprises 262 residues: Flap endonuclease Xni (262 aa).

D105 serves as a coordination point for Mg(2+). The region spanning 162–257 (ERSQFLDLMA…FRVIDSPPEK (96 aa)) is the 5'-3' exonuclease domain. K(+) is bound by residues L172, A173, P181, I183, and I186. Residues 185–190 (GIGPKS) form an interaction with DNA region.

It belongs to the Xni family. Requires Mg(2+) as cofactor. It depends on K(+) as a cofactor.

Its function is as follows. Has flap endonuclease activity. During DNA replication, flap endonucleases cleave the 5'-overhanging flap structure that is generated by displacement synthesis when DNA polymerase encounters the 5'-end of a downstream Okazaki fragment. The protein is Flap endonuclease Xni of Shewanella baltica (strain OS155 / ATCC BAA-1091).